Reading from the N-terminus, the 407-residue chain is NAD(P)H-quinone oxidoreductase subunit 1 (407 aa).

9 consecutive transmembrane segments (helical) span residues 28–48 (WLPLPMIVILLTVTVGVIAAV), 96–116 (WLFTLGPAIVIIPVFFSYLVI), 127–147 (ITIGIFFIIAVASISPIGALM), 175–195 (LALSVLAIVMMSSSLSTVDIV), 203–223 (LFSFFSWNIWRQPIGFVIFLI), 267–287 (LILASLIASVLFLGGWSFIVP), 309–329 (ALVGISVTILKATFFVFLAIL), 347–367 (WKFLLPVSLFNLLLTAALVLL), and 374–394 (TLPLYLPLIIFVGLVFVAMSL).

The protein belongs to the complex I subunit 1 family. NDH-1 is composed of at least 11 different subunits.

Its subcellular location is the cell inner membrane. The enzyme catalyses a plastoquinone + NADH + (n+1) H(+)(in) = a plastoquinol + NAD(+) + n H(+)(out). It carries out the reaction a plastoquinone + NADPH + (n+1) H(+)(in) = a plastoquinol + NADP(+) + n H(+)(out). Its function is as follows. NDH-1 shuttles electrons from an unknown electron donor, via FMN and iron-sulfur (Fe-S) centers, to quinones in the respiratory and/or the photosynthetic chain. The immediate electron acceptor for the enzyme in this species is believed to be plastoquinone. Couples the redox reaction to proton translocation, and thus conserves the redox energy in a proton gradient. The chain is NAD(P)H-quinone oxidoreductase subunit 1 from Gloeobacter violaceus (strain ATCC 29082 / PCC 7421).